Here is a 386-residue protein sequence, read N- to C-terminus: Homoserine O-succinyltransferase (386 aa).

The 310-residue stretch at 49–358 folds into the AB hydrolase-1 domain; sequence NAILICHALS…DAEQGHDSFL (310 aa). Catalysis depends on Ser156, which acts as the Nucleophile. Position 226 (Arg226) interacts with substrate. Active-site residues include Asp321 and His354. Asp355 contributes to the substrate binding site.

It belongs to the AB hydrolase superfamily. MetX family. In terms of assembly, homodimer.

The protein resides in the cytoplasm. The catalysed reaction is L-homoserine + succinyl-CoA = O-succinyl-L-homoserine + CoA. It functions in the pathway amino-acid biosynthesis; L-methionine biosynthesis via de novo pathway; O-succinyl-L-homoserine from L-homoserine: step 1/1. In terms of biological role, transfers a succinyl group from succinyl-CoA to L-homoserine, forming succinyl-L-homoserine. In Acinetobacter baumannii (strain SDF), this protein is Homoserine O-succinyltransferase.